Reading from the N-terminus, the 1547-residue chain is DNA topoisomerase 2 (1547 aa).

The disordered stretch occupies residues 8-30 (FNKMSSPKQNGTGEPAPAKGQKG). A compositionally biased stretch (polar residues) spans 9-19 (NKMSSPKQNGT). Residues N99, N128, 156-158 (SSN), and 169-176 (GRNGYGAK) contribute to the ATP site. The tract at residues 351-353 (KKK) is interaction with DNA. Residue 385-387 (QTK) coordinates ATP. A Toprim domain is found at 463 to 580 (CTLILTEGDS…ELLKLPFLEE (118 aa)). Mg(2+) is bound by residues E469, D549, and D551. In terms of domain architecture, Topo IIA-type catalytic spans 723-1192 (IPSMIDGLKP…TAPMLWREDL (470 aa)). The O-(5'-phospho-DNA)-tyrosine intermediate role is filled by Y813. An interaction with DNA region spans residues 996-1005 (KLQTTISMTC). Disordered regions lie at residues 1107–1134 (TALE…VDPD), 1209–1249 (EELN…ISDD), 1261–1423 (KTRK…MDSD), and 1459–1547 (RQRR…SLSD). The segment covering 1109 to 1123 (LEDDDAQESEEEEPE) has biased composition (acidic residues). The segment covering 1124–1134 (PDPKGKPVDPD) has biased composition (basic and acidic residues). Residues 1216–1228 (KTSKAMAGKKNRK) show a composition bias toward basic residues. 2 stretches are compositionally biased toward basic and acidic residues: residues 1238-1249 (NGRRVEPKISDD) and 1294-1315 (EKPE…DGLK). Over residues 1331–1344 (TFSGSSSGEMSASD) the composition is skewed to low complexity. Over residues 1373–1383 (DDSGSDSEPEL) the composition is skewed to acidic residues. Basic and acidic residues-rich tracts occupy residues 1384 to 1394 (LDNKIDSDHEA) and 1459 to 1488 (RQRR…DEKK). The span at 1513 to 1528 (KGKKKTAANPKKKAKK) shows a compositional bias: basic residues. Positions 1537–1547 (DFNISDSSLSD) are enriched in polar residues.

Belongs to the type II topoisomerase family. In terms of assembly, homodimer. The cofactor is Mg(2+). Requires Mn(2+) as cofactor. Ca(2+) is required as a cofactor.

Its subcellular location is the nucleus. The enzyme catalyses ATP-dependent breakage, passage and rejoining of double-stranded DNA.. Its function is as follows. Control of topological states of DNA by transient breakage and subsequent rejoining of DNA strands. Topoisomerase II makes double-strand breaks. The chain is DNA topoisomerase 2 (TOP2) from Bombyx mori (Silk moth).